The sequence spans 169 residues: Ribosome maturation factor RimP (169 aa).

The protein belongs to the RimP family.

Its subcellular location is the cytoplasm. Functionally, required for maturation of 30S ribosomal subunits. The polypeptide is Ribosome maturation factor RimP (Streptomyces avermitilis (strain ATCC 31267 / DSM 46492 / JCM 5070 / NBRC 14893 / NCIMB 12804 / NRRL 8165 / MA-4680)).